The chain runs to 113 residues: Propane 2-monooxygenase, effector component (113 aa).

This sequence belongs to the TmoD/XamoD family. As to quaternary structure, the propane 2-monooxygenase multicomponent enzyme system is composed of an electron transfer component and a monooxygenase component interacting with the effector protein PrmD. The electron transfer component is composed of a reductase (PrmB), and the monooxygenase component is formed by a large subunit (PrmA) and a small subunit (PrmC).

Effector component of the propane 2-monooxygenase multicomponent enzyme system which is involved in the degradation of propane via the O2-dependent hydroxylation of propane. This Rhodococcus jostii (strain RHA1) protein is Propane 2-monooxygenase, effector component.